A 466-amino-acid chain; its full sequence is Asparagine--tRNA ligase (466 aa).

This sequence belongs to the class-II aminoacyl-tRNA synthetase family. As to quaternary structure, homodimer.

The protein localises to the cytoplasm. The enzyme catalyses tRNA(Asn) + L-asparagine + ATP = L-asparaginyl-tRNA(Asn) + AMP + diphosphate + H(+). This Buchnera aphidicola subsp. Schizaphis graminum (strain Sg) protein is Asparagine--tRNA ligase.